Consider the following 565-residue polypeptide: Liver carboxylesterase 1 (565 aa).

An N-terminal signal peptide occupies residues 1–18 (MWLCALSLISLTACLSLG). Residues Cys87 and Cys116 are joined by a disulfide bond. The Acyl-ester intermediate role is filled by Ser221. A disulfide bond links Cys273 and Cys284. Glu353 functions as the Charge relay system in the catalytic mechanism. Ser378 is modified (phosphoserine). Asn388 carries N-linked (GlcNAc...) asparagine glycosylation. His466 functions as the Charge relay system in the catalytic mechanism. N-linked (GlcNAc...) asparagine glycosylation occurs at Asn489.

It belongs to the type-B carboxylesterase/lipase family. Homotrimer and homohexamer. Binds to beta-glucuronidase. As to expression, detected in kidney, liver and lung.

It is found in the endoplasmic reticulum lumen. The protein resides in the cytoplasm. Its subcellular location is the lipid droplet. The catalysed reaction is a carboxylic ester + H2O = an alcohol + a carboxylate + H(+). The enzyme catalyses cholesteryl (9Z-octadecenoate) + H2O = cholesterol + (9Z)-octadecenoate + H(+). It carries out the reaction 2-(5Z,8Z,11Z,14Z-eicosatetraenoyl)-glycerol + H2O = glycerol + (5Z,8Z,11Z,14Z)-eicosatetraenoate + H(+). It catalyses the reaction prostaglandin E2 1-glyceryl ester + H2O = prostaglandin E2 + glycerol + H(+). The catalysed reaction is a cholesterol ester + H2O = cholesterol + a fatty acid + H(+). The enzyme catalyses prostaglandin F2alpha 1-glyceryl ester + H2O = prostaglandin F2alpha + glycerol + H(+). In terms of biological role, involved in the detoxification of xenobiotics and in the activation of ester and amide prodrugs. Hydrolyzes aromatic and aliphatic esters, but has no catalytic activity toward amides or a fatty acyl-CoA ester. Displays fatty acid ethyl ester synthase activity, catalyzing the ethyl esterification of oleic acid to ethyloleate. Converts monoacylglycerides to free fatty acids and glycerol. Hydrolyzes of 2-arachidonoylglycerol and prostaglandins. Hydrolyzes cellular cholesteryl esters to free cholesterols and promotes reverse cholesterol transport (RCT) by facilitating both the initial and final steps in the process. First of all, allows free cholesterol efflux from macrophages to extracellular cholesterol acceptors and secondly, releases free cholesterol from lipoprotein-delivered cholesteryl esters in the liver for bile acid synthesis or direct secretion into the bile. The polypeptide is Liver carboxylesterase 1 (Mus musculus (Mouse)).